The following is a 615-amino-acid chain: uncharacterized protein (615 aa).

Position 48 is a phosphoserine (Ser48). Over residues 424 to 433 (DRENELEEGS) the composition is skewed to acidic residues. Residues 424–615 (DRENELEEGS…YARKKTKKNV (192 aa)) are disordered. Basic and acidic residues-rich tracts occupy residues 439-476 (DNEREVREKETEIDKEVAQGDNEREVGEKETEIDKEVG), 484-496 (DGNKDMELNKEVA), 504-521 (ESEKDKEVTESEKDKEVA), and 529-561 (ESEKDIEVADSEKDKEVPQDDEMDGGKVTEPSK). Basic residues-rich tracts occupy residues 579–589 (KKPKVVKKVAK) and 606–615 (YARKKTKKNV).

This is an uncharacterized protein from Arabidopsis thaliana (Mouse-ear cress).